The primary structure comprises 856 residues: Histone-lysine N-methyltransferase EZA1 (856 aa).

Residues 1–11 show a composition bias toward polar residues; it reads MVTDDSNSSGR. 3 disordered regions span residues 1 to 34, 66 to 87, and 366 to 473; these read MVTD…GLEN, VSPF…NSNM, and NVDS…HHGS. The span at 17–28 shows a compositional bias: acidic residues; that stretch reads DDDDDGEEEEDR. The stretch at 22–49 forms a coiled coil; sequence GEEEEDRLEGLENRLSELKRKIQGERVR. The span at 68–87 shows a compositional bias: polar residues; sequence PFSSAASSRATAEDNGNSNM. Positions 374–392 are enriched in basic and acidic residues; sequence EQEHGIRGKREVPILKDSN. The span at 393–419 shows a compositional bias: polar residues; the sequence is DLPNLSNKKQKTAASDTKMSFVNSVPS. The segment covering 438–451 has biased composition (basic and acidic residues); it reads KVNRDSEADAKEVG. The SANT domain occupies 489 to 539; the sequence is PSTEWNPIEKDLYLKGVEIFGRNSCLIARNLLSGLKTCLDVSNYMRENEVS. One can recognise a CXC domain in the interval 594-693; that stretch reads WKRIAGGKNQ…SLGEAPRRGE (100 aa). Residues 707-822 form the SET domain; the sequence is QRILLGKSDV…ASEELFYDYR (116 aa). Position 821 (Tyr-821) interacts with S-adenosyl-L-methionine. Residues 827-856 form a disordered region; the sequence is QAPVWARKPEGSKKDDSAITHRRARKHQSH. The span at 833–845 shows a compositional bias: basic and acidic residues; it reads RKPEGSKKDDSAI. The Nuclear localization signal motif lies at 838-845; it reads SKKDDSAI. Residues 846–856 show a composition bias toward basic residues; the sequence is THRRARKHQSH.

Belongs to the class V-like SAM-binding methyltransferase superfamily. Histone-lysine methyltransferase family. EZ subfamily. Component of the plant homeodomain / polycomb repressive complex 2 (PHD-PRC2) large complex during prolonged cold, composed of core PRC2 components (VRN2, EZA1, FIE and MSI1), and three related PHD finger proteins (VIL1, VIL2 and VIN3) that mediates histone H3 trimethylation on 'Lys-27' H3K27me3. Interacts with TAF13. Interacts with EOL1. Interacts (via SANT domain) with HXK1 in the nucleus.

It localises to the nucleus. It catalyses the reaction L-lysyl(27)-[histone H3] + 3 S-adenosyl-L-methionine = N(6),N(6),N(6)-trimethyl-L-lysyl(27)-[histone H3] + 3 S-adenosyl-L-homocysteine + 3 H(+). Functionally, polycomb group (PcG) protein. Catalytic subunit of some PcG multiprotein complex, which methylates 'Lys-27' of histone H3, leading to transcriptional repression of the affected target genes, mainly abscisic acid (ABA) responsive elements. PcG proteins act by forming multiprotein complexes, which are required to maintain the transcriptionally repressive state of homeotic genes throughout development. PcG proteins are not required to initiate repression, but to maintain it during later stages of development. Forms a nuclear complex with CLF and HXK1 to target common glucose-responsive genes and regulate glucose signaling by glucose-mediated gene repression. Affects the recruitment of HXK1 to the target chromatin. The sequence is that of Histone-lysine N-methyltransferase EZA1 from Arabidopsis thaliana (Mouse-ear cress).